Consider the following 1289-residue polypeptide: MAEIKREFRAEDGLDAGGDKIINVALADRTVGTDGVNVDYLIQENTVQQYDPTRGYLKDFVIIYDNRFWAAINDIPKPAGAFNSGRWRALRTDANWITVSSGSYQLKSGEAISVNTAAGNDITFTLPSSPIDGDTIVLQDIGGKPGVNQVLIVAPVQSIVNFRGEQVRSVLMTHPKSQLVLIFSNRLWQMYVADYSREAIVVTPANTYQAQSNDFIVRRFTSAAPINVKLPRFANHGDIINFVDLDKLNPLYHTIVTTYDETTSVQEVGTHSIEGRTSIDGFLMFDDNEKLWRLFDGDSKARLRIITTNSNIRPNEEVMVFGANNGTTQTIELKLPTNISVGDTVKISMNYMRKGQTVKIKAADEDKIASSVQLLQFPKRSEYPPEAEWVTVQELVFNDETNYVPVLELAYIEDSDGKYWVVQQNVPTVERVDSLNDSTRARLGVIALATQAQANVDLENSPQKELAITPETLANRTATETRRGIARIATTAQVNQNTTFSFADDIIITPKKLNERTATETRRGVAEIATQQETNAGTDDTTIITPKKLQARQGSESLSGIVTFVSTAGATPASSRELNGTNVYNKNTDNLVVSPKALDQYKATPTQQGAVILAVESEVIAGQSQQGWANAVVTPETLHKKTSTDGRIGLIEIATQSEVNTGTDYTRAVTPKTLNDRRATESLSGIAEIATQVEFDAGVDDTRISTPLKIKTRFNSTDRTSVVALSGLVESGTLWDHYTLNILEANETQRGTLRVATQVEAAAGTLDNVLITPKKLLGTKSTEAQEGVIKVATQSETVTGTSANTAVSPKNLKWIAQSEPTWAATTAIRGFVKTSSGSITFVGNDTVGSTQDLELYEKNSYAVSPYELNRVLANYLPLKAKAADTNLLDGLDSSQFIRRDIAQTVNGSLTLTQQTNLSAPLVSSSTGEFGGSLAANRTFTIRNTGAPTSIVFEKGPASGANPAQSMSIRVWGNQFGGGSDTTRSTVFEVGDDTSHHFYSQRNKDGNIAFNINGTVMPININASGLMNVNGTATFGRSVTANGEFISKSANAFRAINGDYGFFIRNDASNTYFLLTAAGDQTGGFNGLRPLLINNQSGQITIGEGLIIAKGVTINSGGLTVNSRIRSQGTKTSDLYTRAPTSDTVGFWSIDINDSATYNQFPGYFKMVEKTNEVTGLPYLERGEEVKSPGTLTQFGNTLDSLYQDWITYPTTPEARTTRWTRTWQKTKNSWSSFVQVFDGGNPPQPSDIGALPSDNATMGNLTIRDFLRIGNVRIVPDPVNKTVKFEWVE.

The protein belongs to the tevenvirinae long-tail fiber proximal subunit protein family. The long-tail fibers are trimeric, with a stoichiometry of gp34/gp37/gp36/gp35 of 3:3:3:1.

It localises to the virion. In terms of biological role, structural component of the proximal-half of the long-tail fiber. The long-tail fibers of T4 are about 1600 Angstroms long with a kink in the middle that divides the fiber into proximal and distal halves. In Escherichia coli (Bacteriophage T4), this protein is Long-tail fiber proximal subunit (34).